The sequence spans 473 residues: MAKGRVIQVMGPVVDVKFEDGHLPAIYNALKIKHKARNEKEVDIDLTLEVALHLGDDTVRTIAMSTTDGLVRGMEVIDTGAPISVPVGEVTLGRVFNVLGEPIDLGEEIPADARRDAIHRPAPKFEQLSTQVEILETGIKVVDLLAPYIKGGKIGLFGGAGVGKTVLIQELINNIAQEHGGISVFAGVGERTREGNDLYHEMKDSGVINKTAMVFGQMNEPPGARMRVALTGLTMAEYFRDEQGQDVLFFIDNIFRFTQAGSEVSALLGRMPSAVGYQPTLATEMGQLQERITSTAVGSVTSIQAIYVPADDYTDPAPATTFAHLDATTNLERKLSEMGIYPAVDPLASTSRALSPEIVGEEHYQVARKVQQTLQRYKELQDIIAILGMDELSEEDKLVVHRARRIQFFLSQNFHVAEQFTGQPGSYVPVKETVRGFKEILEGKYDHLPEDAFRLVGRIEEVIEKARKMGVEV.

Residue 158-165 (GGAGVGKT) coordinates ATP.

It belongs to the ATPase alpha/beta chains family. As to quaternary structure, F-type ATPases have 2 components, CF(1) - the catalytic core - and CF(0) - the membrane proton channel. CF(1) has five subunits: alpha(3), beta(3), gamma(1), delta(1), epsilon(1). CF(0) has three main subunits: a(1), b(2) and c(9-12). The alpha and beta chains form an alternating ring which encloses part of the gamma chain. CF(1) is attached to CF(0) by a central stalk formed by the gamma and epsilon chains, while a peripheral stalk is formed by the delta and b chains.

The protein localises to the cell membrane. The catalysed reaction is ATP + H2O + 4 H(+)(in) = ADP + phosphate + 5 H(+)(out). In terms of biological role, produces ATP from ADP in the presence of a proton gradient across the membrane. The catalytic sites are hosted primarily by the beta subunits. This chain is ATP synthase subunit beta, found in Anoxybacillus flavithermus (strain DSM 21510 / WK1).